A 223-amino-acid chain; its full sequence is Deoxyribose-phosphate aldolase 2 (223 aa).

Aspartate 89 (proton donor/acceptor) is an active-site residue. Lysine 152 serves as the catalytic Schiff-base intermediate with acetaldehyde. The active-site Proton donor/acceptor is lysine 181.

The protein belongs to the DeoC/FbaB aldolase family. DeoC type 1 subfamily.

It localises to the cytoplasm. It carries out the reaction 2-deoxy-D-ribose 5-phosphate = D-glyceraldehyde 3-phosphate + acetaldehyde. Its pathway is carbohydrate degradation; 2-deoxy-D-ribose 1-phosphate degradation; D-glyceraldehyde 3-phosphate and acetaldehyde from 2-deoxy-alpha-D-ribose 1-phosphate: step 2/2. Functionally, catalyzes a reversible aldol reaction between acetaldehyde and D-glyceraldehyde 3-phosphate to generate 2-deoxy-D-ribose 5-phosphate. This chain is Deoxyribose-phosphate aldolase 2, found in Bacillus licheniformis (strain ATCC 14580 / DSM 13 / JCM 2505 / CCUG 7422 / NBRC 12200 / NCIMB 9375 / NCTC 10341 / NRRL NRS-1264 / Gibson 46).